A 389-amino-acid chain; its full sequence is Flagellar P-ring protein (389 aa).

Residues 1–33 (MRPLVAARRRAAACCALAACMLALAFAPAAARA) form the signal peptide.

Belongs to the FlgI family. As to quaternary structure, the basal body constitutes a major portion of the flagellar organelle and consists of four rings (L,P,S, and M) mounted on a central rod.

The protein resides in the periplasm. It localises to the bacterial flagellum basal body. Functionally, assembles around the rod to form the L-ring and probably protects the motor/basal body from shearing forces during rotation. In Burkholderia mallei (strain ATCC 23344), this protein is Flagellar P-ring protein.